The sequence spans 133 residues: Complexin-1 (133 aa).

2 disordered regions span residues 1-40 (MDFVMKQALGGATKDMGKMLGGDEEKDPDAEKKEEERLEA) and 85-112 (AMEAQAEGSLTRPKKAIPAGCGDEDEEE). Residues 15–40 (DMGKMLGGDEEKDPDAEKKEEERLEA) are compositionally biased toward basic and acidic residues. Residues 28-60 (PDAEKKEEERLEALRQAEEERAGKYAKMEAERE) adopt a coiled-coil conformation.

This sequence belongs to the complexin/synaphin family. Binds to the SNARE core complex containing SNAP25, VAMP2 and syntaxin-1. Nervous system. Present in electric organ (at protein level).

Its subcellular location is the cytoplasm. It localises to the cytosol. Positively regulates a late step in synaptic vesicle exocytosis. The sequence is that of Complexin-1 from Narke japonica (Japanese sleeper ray).